We begin with the raw amino-acid sequence, 466 residues long: Uronate isomerase (466 aa).

The protein belongs to the metallo-dependent hydrolases superfamily. Uronate isomerase family.

The enzyme catalyses D-glucuronate = D-fructuronate. The catalysed reaction is aldehydo-D-galacturonate = keto-D-tagaturonate. Its pathway is carbohydrate metabolism; pentose and glucuronate interconversion. The protein is Uronate isomerase (uxaC) of Brucella melitensis biotype 1 (strain ATCC 23456 / CCUG 17765 / NCTC 10094 / 16M).